Consider the following 132-residue polypeptide: Ribosome-binding factor A (132 aa).

This sequence belongs to the RbfA family. Monomer. Binds 30S ribosomal subunits, but not 50S ribosomal subunits or 70S ribosomes.

It localises to the cytoplasm. One of several proteins that assist in the late maturation steps of the functional core of the 30S ribosomal subunit. Associates with free 30S ribosomal subunits (but not with 30S subunits that are part of 70S ribosomes or polysomes). Required for efficient processing of 16S rRNA. May interact with the 5'-terminal helix region of 16S rRNA. The polypeptide is Ribosome-binding factor A (Pseudomonas putida (strain ATCC 700007 / DSM 6899 / JCM 31910 / BCRC 17059 / LMG 24140 / F1)).